Reading from the N-terminus, the 381-residue chain is Cytochrome b (381 aa).

4 helical membrane-spanning segments follow: residues 32–52 (GGSL…LLAM), 76–98 (MILR…LHVL), 113–133 (VWIS…IGYV), and 179–199 (FYSF…FHIA). Positions 82 and 96 each coordinate heme b. Heme b is bound by residues histidine 183 and histidine 197. Histidine 202 is a binding site for a ubiquinone. 4 helical membrane-spanning segments follow: residues 225-245 (FGAK…ILVF), 289-309 (AMGV…PFIG), 318-338 (ITEW…WLGG), and 345-365 (TSFV…VCQP).

It belongs to the cytochrome b family. In terms of assembly, the main subunits of complex b-c1 are: cytochrome b, cytochrome c1 and the Rieske protein. The cofactor is heme b.

Its subcellular location is the mitochondrion inner membrane. In terms of biological role, component of the ubiquinol-cytochrome c reductase complex (complex III or cytochrome b-c1 complex) that is part of the mitochondrial respiratory chain. The b-c1 complex mediates electron transfer from ubiquinol to cytochrome c. Contributes to the generation of a proton gradient across the mitochondrial membrane that is then used for ATP synthesis. In Chlamydomonas reinhardtii (Chlamydomonas smithii), this protein is Cytochrome b (MT-CYB).